The following is a 215-amino-acid chain: Cytochrome b6 (215 aa).

Residues 32–52 (IFYCLGGITLVCFLIQFATGF) traverse the membrane as a helical segment. A heme c-binding site is contributed by Cys35. Residues His86 and His100 each contribute to the heme b site. Helical transmembrane passes span 90 to 110 (ASMM…TGGF), 116 to 136 (LTWV…VTGY), and 186 to 206 (AHTF…FLMI). Heme b contacts are provided by His187 and His202.

This sequence belongs to the cytochrome b family. PetB subfamily. As to quaternary structure, the 4 large subunits of the cytochrome b6-f complex are cytochrome b6, subunit IV (17 kDa polypeptide, PetD), cytochrome f and the Rieske protein, while the 4 small subunits are PetG, PetL, PetM and PetN. The complex functions as a dimer. Requires heme b as cofactor. It depends on heme c as a cofactor.

Its subcellular location is the cellular thylakoid membrane. Functionally, component of the cytochrome b6-f complex, which mediates electron transfer between photosystem II (PSII) and photosystem I (PSI), cyclic electron flow around PSI, and state transitions. The sequence is that of Cytochrome b6 from Trichormus variabilis (strain ATCC 29413 / PCC 7937) (Anabaena variabilis).